A 143-amino-acid polypeptide reads, in one-letter code: Small ribosomal subunit protein eS19B (143 aa).

It belongs to the eukaryotic ribosomal protein eS19 family. As to quaternary structure, component of the small ribosomal subunit (SSU). Mature yeast ribosomes consist of a small (40S) and a large (60S) subunit. The 40S small subunit contains 1 molecule of ribosomal RNA (18S rRNA) and at least 33 different proteins. The large 60S subunit contains 3 rRNA molecules (25S, 5.8S and 5S rRNA) and at least 46 different proteins.

The protein resides in the cytoplasm. Its subcellular location is the nucleus. Its function is as follows. Component of the ribosome, a large ribonucleoprotein complex responsible for the synthesis of proteins in the cell. The small ribosomal subunit (SSU) binds messenger RNAs (mRNAs) and translates the encoded message by selecting cognate aminoacyl-transfer RNA (tRNA) molecules. The large subunit (LSU) contains the ribosomal catalytic site termed the peptidyl transferase center (PTC), which catalyzes the formation of peptide bonds, thereby polymerizing the amino acids delivered by tRNAs into a polypeptide chain. The nascent polypeptides leave the ribosome through a tunnel in the LSU and interact with protein factors that function in enzymatic processing, targeting, and the membrane insertion of nascent chains at the exit of the ribosomal tunnel. eS19 is required for proper maturation of the small (40S) ribosomal subunit. Binds to 40S pre-ribosomal particles, probably required after association of NOC4 but before association of ENP1, TSR1 and RIO2 with 20/21S pre-rRNA. The polypeptide is Small ribosomal subunit protein eS19B (rps1902) (Schizosaccharomyces pombe (strain 972 / ATCC 24843) (Fission yeast)).